The sequence spans 49 residues: uncharacterized protein (49 aa).

This is an uncharacterized protein from Bacillus subtilis (strain 168).